The following is a 175-amino-acid chain: Large ribosomal subunit protein uL10 (175 aa).

Belongs to the universal ribosomal protein uL10 family. As to quaternary structure, part of the ribosomal stalk of the 50S ribosomal subunit. The N-terminus interacts with L11 and the large rRNA to form the base of the stalk. The C-terminus forms an elongated spine to which L12 dimers bind in a sequential fashion forming a multimeric L10(L12)X complex.

Forms part of the ribosomal stalk, playing a central role in the interaction of the ribosome with GTP-bound translation factors. This is Large ribosomal subunit protein uL10 from Prochlorococcus marinus (strain MIT 9211).